Reading from the N-terminus, the 320-residue chain is Olfactory receptor 10J1 (320 aa).

Over 1 to 36 (MLLCFRFGNQSMKRENFTLITDFVFQGFSSFHEQQI) the chain is Extracellular. N-linked (GlcNAc...) asparagine glycosylation is found at Asn-9 and Asn-16. The chain crosses the membrane as a helical span at residues 37 to 57 (TLFGVFLALYILTLAGNIIIV). Over 58–65 (TIIRMDLH) the chain is Cytoplasmic. A helical transmembrane segment spans residues 66 to 86 (LHTPMYFFLSMLSTSETVYTL). Topologically, residues 87–110 (VILPRMLSSLVGMSQPISLAGCAT) are extracellular. Residues Cys-108 and Cys-199 are joined by a disulfide bond. A helical membrane pass occupies residues 111–131 (QMFFFVTFGITNCFLLTAMGY). Residues 132–150 (DRYVAICNPLRYMVIMNKR) lie on the Cytoplasmic side of the membrane. Residues 151 to 171 (LRIQLVLGACSIGLIVAITQV) form a helical membrane-spanning segment. Over 172 to 207 (TSVFRLPFCARKVPHFFCDIRPVMKLSCIDTTVNEI) the chain is Extracellular. The chain crosses the membrane as a helical span at residues 208–227 (LTLIISVLVLVVPMGLVFIS). At 228 to 247 (YVLIISTILKIASVEGRKKA) the chain is on the cytoplasmic side. The chain crosses the membrane as a helical span at residues 248–268 (FATCASHLTVVIVHYSCASIA). Residues 269 to 281 (YLKPKSENTREHD) lie on the Extracellular side of the membrane. The chain crosses the membrane as a helical span at residues 282–302 (QLISVTYTVITPLLNPVVYTL). Topologically, residues 303 to 320 (RNKEVKDALCRAVGGKFS) are cytoplasmic.

The protein belongs to the G-protein coupled receptor 1 family.

It localises to the cell membrane. In terms of biological role, odorant receptor. This chain is Olfactory receptor 10J1 (OR10J1), found in Homo sapiens (Human).